Reading from the N-terminus, the 119-residue chain is Large ribosomal subunit protein uL18 (119 aa).

Belongs to the universal ribosomal protein uL18 family. In terms of assembly, part of the 50S ribosomal subunit; part of the 5S rRNA/L5/L18/L25 subcomplex. Contacts the 5S and 23S rRNAs.

This is one of the proteins that bind and probably mediate the attachment of the 5S RNA into the large ribosomal subunit, where it forms part of the central protuberance. In Cupriavidus necator (strain ATCC 17699 / DSM 428 / KCTC 22496 / NCIMB 10442 / H16 / Stanier 337) (Ralstonia eutropha), this protein is Large ribosomal subunit protein uL18.